A 144-amino-acid polypeptide reads, in one-letter code: D-aminoacyl-tRNA deacylase (144 aa).

The Gly-cisPro motif, important for rejection of L-amino acids motif lies at 136-137; that stretch reads GP.

This sequence belongs to the DTD family. In terms of assembly, homodimer.

The protein resides in the cytoplasm. The catalysed reaction is glycyl-tRNA(Ala) + H2O = tRNA(Ala) + glycine + H(+). The enzyme catalyses a D-aminoacyl-tRNA + H2O = a tRNA + a D-alpha-amino acid + H(+). Functionally, an aminoacyl-tRNA editing enzyme that deacylates mischarged D-aminoacyl-tRNAs. Also deacylates mischarged glycyl-tRNA(Ala), protecting cells against glycine mischarging by AlaRS. Acts via tRNA-based rather than protein-based catalysis; rejects L-amino acids rather than detecting D-amino acids in the active site. By recycling D-aminoacyl-tRNA to D-amino acids and free tRNA molecules, this enzyme counteracts the toxicity associated with the formation of D-aminoacyl-tRNA entities in vivo and helps enforce protein L-homochirality. In Haemophilus influenzae (strain 86-028NP), this protein is D-aminoacyl-tRNA deacylase.